A 480-amino-acid polypeptide reads, in one-letter code: Plant UBX domain-containing protein 10 (480 aa).

Disordered regions lie at residues 47–78 (DASS…PRGI) and 335–383 (ADQA…AARV). The stretch at 330–389 (RAALEADQAREQQRQEEKERLEREAAEAERKLKEEEEARERAAREAEERQAARVRMRQEK) forms a coiled coil. The span at 336–383 (DQAREQQRQEEKERLEREAAEAERKLKEEEEARERAAREAEERQAARV) shows a compositional bias: basic and acidic residues. Residues 399–477 (KGPDVTQVLV…GLHPQASLFI (79 aa)) form the UBX domain.

The polypeptide is Plant UBX domain-containing protein 10 (Arabidopsis thaliana (Mouse-ear cress)).